Consider the following 70-residue polypeptide: Aurein-3.1 (70 aa).

Residues 1 to 22 (MAFLKKSLFLVLFLGLVSLSIC) form the signal peptide. A propeptide spanning residues 23-49 (EKEKRQNEEDEDENEAANHEEGSEEKR) is cleaved from the precursor. The tract at residues 27-48 (RQNEEDEDENEAANHEEGSEEK) is disordered. Residues 38–48 (AANHEEGSEEK) show a composition bias toward basic and acidic residues. An Isoleucine amide modification is found at Ile66.

In terms of tissue distribution, expressed by the skin dorsal glands.

It localises to the secreted. Its subcellular location is the target cell membrane. In terms of biological role, amphipathic alpha-helical antimicrobial peptide with weak to potent activity against Gram-positive bacteria, and no activity against Gram-negative bacteria. Probably acts by disturbing membrane functions with its amphipathic structure. Shows anticancer activity. This is Aurein-3.1 from Ranoidea aurea (Green and golden bell frog).